Here is a 349-residue protein sequence, read N- to C-terminus: MQQDGLSSVNQLGGLFVNGRPLPLDTRQQIVQLAIRGMRPCDISRSLKVSNGCVSKILGRYYRTGVLEPKCIGGSKPRLATPAVVARIAQLKDEYPALFAWEIQHQLCTEGLCTQDKAPSVSSINRVLRALQEDQSLHWTQLRSPAVLAPVLPSPHSNCGAPRGPHPGTSHRNRTIFSPGQAEALEKEFQRGQYPDSVARGKLAAATSLPEDTVRVWFSNRRAKWRRQEKLKWEAQLPGASQDLTVPKNSPGIISAQQSPGSVPSAALPVLEPLSPSFCQLCCGTAPGRCSSDTSSQAYLQPYWDCQSLLPVASSSYVEFAWPCLTTHPVHHLIGGPGQVPSTHCSNWP.

Residues 5-131 (GLSSVNQLGG…SSINRVLRAL (127 aa)) constitute a DNA-binding region (paired). The PAI subdomain stretch occupies residues 8–64 (SVNQLGGLFVNGRPLPLDTRQQIVQLAIRGMRPCDISRSLKVSNGCVSKILGRYYRT). Positions 83 to 131 (AVVARIAQLKDEYPALFAWEIQHQLCTEGLCTQDKAPSVSSINRVLRAL) are RED subdomain. Residues 170–229 (SHRNRTIFSPGQAEALEKEFQRGQYPDSVARGKLAAATSLPEDTVRVWFSNRRAKWRRQE) constitute a DNA-binding region (homeobox). The interval 278 to 349 (FCQLCCGTAP…VPSTHCSNWP (72 aa)) is transcription repression.

It belongs to the paired homeobox family. In terms of tissue distribution, expressed in early pancreas. Later restricted to beta cells. Undetectable in adult islets.

Its subcellular location is the nucleus. Its function is as follows. Plays an important role in the differentiation and development of pancreatic islet beta cells. Transcriptional repressor that competes with PAX6 in binding to a common element in the glucagon, insulin and somatostatin promoters. This is Paired box protein Pax-4 (Pax4) from Mus musculus (Mouse).